Reading from the N-terminus, the 242-residue chain is Anamorsin homolog (242 aa).

Positions 1–140 are N-terminal SAM-like domain; that stretch reads MMNFADTLVI…NVTAENPDFL (140 aa). The disordered stretch occupies residues 140–159; it reads LSNEDDNDEHSSDGEAHENA. Residues 141–162 are linker; it reads SNEDDNDEHSSDGEAHENAEDN. The segment covering 148 to 159 has biased composition (basic and acidic residues); it reads EHSSDGEAHENA. [4Fe-4S] cluster contacts are provided by C205, C208, C216, and C219. 2 short sequence motifs (cx2C motif) span residues 205–208 and 216–219; these read CGNC and CASC. Residues 205 to 219 form a fe-S binding site B region; sequence CGNCYLGDAFRCASC.

The protein belongs to the anamorsin family. Monomer. Requires [4Fe-4S] cluster as cofactor.

The protein resides in the cytoplasm. The protein localises to the mitochondrion intermembrane space. Functionally, component of the cytosolic iron-sulfur (Fe-S) protein assembly (CIA) machinery. Required for the maturation of extramitochondrial Fe-S proteins. Part of an electron transfer chain functioning in an early step of cytosolic Fe-S biogenesis, facilitating the de novo assembly of a [4Fe-4S] cluster on the cytosolic Fe-S scaffold complex. Electrons are transferred from NADPH via a FAD- and FMN-containing diflavin oxidoreductase. Together with the diflavin oxidoreductase, also required for the assembly of the diferric tyrosyl radical cofactor of ribonucleotide reductase (RNR), probably by providing electrons for reduction during radical cofactor maturation in the catalytic small subunit. This is Anamorsin homolog from Plasmodium vivax (strain Salvador I).